A 210-amino-acid chain; its full sequence is Redox-sensing transcriptional repressor Rex (210 aa).

Positions 17 to 56 (KYHRYLNELMKNDVDRISSKELGEKIGFTASQIRQDLNCF) form a DNA-binding region, H-T-H motif. Residue 91–96 (GAGNIG) participates in NAD(+) binding.

Belongs to the transcriptional regulatory Rex family. In terms of assembly, homodimer.

It is found in the cytoplasm. Its function is as follows. Modulates transcription in response to changes in cellular NADH/NAD(+) redox state. This is Redox-sensing transcriptional repressor Rex from Clostridium botulinum (strain Eklund 17B / Type B).